Reading from the N-terminus, the 282-residue chain is Short-chain dehydrogenase/reductase prx7 (282 aa).

Residues asparagine 23, asparagine 70, tyrosine 150, lysine 154, valine 183, and threonine 185 each contribute to the NADP(+) site. The Proton acceptor role is filled by tyrosine 150. Catalysis depends on lysine 154, which acts as the Lowers pKa of active site Tyr.

It belongs to the short-chain dehydrogenases/reductases (SDR) family.

It participates in sesquiterpene biosynthesis. Functionally, short-chain dehydrogenase/reductase; part of the gene cluster that mediates the biosynthesis of PR-toxin, a bicyclic sesquiterpene belonging to the eremophilane class and acting as a mycotoxin. The first step of the pathway is catalyzed by the aristolochene synthase which performs the cyclization of trans,trans-farnesyl diphosphate (FPP) to the bicyclic sesquiterpene aristolochene. Following the formation of aristolochene, the non-oxygenated aristolochene is converted to the trioxygenated intermediate eremofortin B, via 7-epi-neopetasone. This conversion appears to involve three enzymes, a hydroxysterol oxidase-like enzyme, the quinone-oxidase prx3 that forms the quinone-type-structure in the bicyclic nucleus of aristolochene with the C8-oxo group and the C-3 hydroxyl group, and the P450 monooxygenase prx9 that introduces the epoxide at the double bond between carbons 1 and 2. No monoxy or dioxy-intermediates have been reported to be released to the broth, so these three early oxidative reactions may be coupled together. Eremofortin B is further oxidized by another P450 monooxygenase, that introduces a second epoxide between carbons 7 and 11 prior to acetylation to eremofortin A by the acetyltransferase prx11. The second epoxidation may be performed by a second P450 monooxygenase. After the acetylation step, eremofortin A is converted to eremofortin C and then to PR-toxin. First the conversion of eremofortin A to eremofortin C proceeds by oxidation of the side chain of the molecule at C-12 and is catalyzed by the short-chain oxidoreductase prx1. The cytochrome P450 monooxygenase prx8 also plays a role in this step. The primary alcohol formed at C-12 is finally oxidized by the short-chain alcohol dehydrogenase prx4 that forms PR-toxin. This chain is Short-chain dehydrogenase/reductase prx7, found in Penicillium rubens (strain ATCC 28089 / DSM 1075 / NRRL 1951 / Wisconsin 54-1255) (Penicillium chrysogenum).